A 651-amino-acid chain; its full sequence is L-aspartate oxidase, chloroplastic (651 aa).

A chloroplast-targeting transit peptide spans 1 to 74 (MAAHVSTGNI…PISETSKPIR (74 aa)). FAD contacts are provided by residues 92 to 95 (SGVA), lysine 114, 121 to 128 (NTNYAQGG), and aspartate 292. The active-site Proton donor/acceptor is the arginine 368. Residues glutamate 453 and 469–470 (SL) contribute to the FAD site.

It belongs to the FAD-dependent oxidoreductase 2 family. NadB subfamily. In terms of assembly, interacts in vitro with QS. The cofactor is FAD.

The protein localises to the plastid. It localises to the chloroplast. The enzyme catalyses L-aspartate + O2 = iminosuccinate + H2O2. The protein operates within cofactor biosynthesis; NAD(+) biosynthesis; iminoaspartate from L-aspartate (oxidase route): step 1/1. Catalyzes the oxidation of L-aspartate to iminoaspartate. Can complement nadB-deficient E.coli mutant. Plays a role in stomatal immunity. The polypeptide is L-aspartate oxidase, chloroplastic (Arabidopsis thaliana (Mouse-ear cress)).